Reading from the N-terminus, the 144-residue chain is MQDVIFFLSKHILLISIWIFCFIAAVFFITRTLLSKSKMINNFQAIKLINQDKAIVVDTRSLESFKEGHILNSINVPLKNIFLGKIKEIEIYKMFPIILVLSDTYKVNACIKKFFEYGFNRVYILKNGLYYWKTDNLPLIVNDK.

One can recognise a Rhodanese domain in the interval 50 to 140 (NQDKAIVVDT…YWKTDNLPLI (91 aa)).

This is an uncharacterized protein from Buchnera aphidicola subsp. Acyrthosiphon pisum (strain APS) (Acyrthosiphon pisum symbiotic bacterium).